The primary structure comprises 284 residues: MYKKIGIIYHPLNPAACDLAIKLTAKLDSLGIENWSDSAWQADKLTSKMQNTQLIFTTGGDGTILRTAHAILPLEIPILSVNLGKVGFMTELSPEDAISGLEKVLAGDGWIDERSLLEAEYLPHDSAQSRQFFVMNDAVVARGQVARVICVSVDINSQPFTTYKADGAIVSTATGSTGYSYAAGGPVLQPNSADIILTPILPHLGRGYSLVLPSDSTVDLQVNTWHEATLSIDGFINMQVSSGDTLRLRRSSKKVKFMRLRPNNYFYKELDTKLKGNNESVYDR.

The active-site Proton acceptor is aspartate 61. Residues 61 to 62 (DG), arginine 66, 136 to 137 (ND), arginine 147, lysine 164, aspartate 166, and leucine 201 each bind NAD(+).

The protein belongs to the NAD kinase family. Requires a divalent metal cation as cofactor.

It is found in the cytoplasm. It catalyses the reaction NAD(+) + ATP = ADP + NADP(+) + H(+). Involved in the regulation of the intracellular balance of NAD and NADP, and is a key enzyme in the biosynthesis of NADP. Catalyzes specifically the phosphorylation on 2'-hydroxyl of the adenosine moiety of NAD to yield NADP. This is NAD kinase from Dehalococcoides mccartyi (strain CBDB1).